Reading from the N-terminus, the 562-residue chain is Potassium voltage-gated channel subfamily V member 2 (562 aa).

A compositionally biased stretch (basic and acidic residues) spans 1–10; it reads MLKQSNERRW. Residues 1–34 are disordered; it reads MLKQSNERRWSLSYKPWSTPETEDVPNTGSNQHR. The Cytoplasmic portion of the chain corresponds to 1-163; that stretch reads MLKQSNERRW…TDEYFFDRDP (163 aa). A helical membrane pass occupies residues 164-184; sequence AVFQLIYNFYTSGVLLVRDEL. Residues 185 to 269 are Extracellular-facing; sequence CPRSFLEELG…KPFSSVAAKA (85 aa). The helical transmembrane segment at 270 to 290 threads the bilayer; the sequence is MGVATNLFVLISVVALALNTV. Residues 291 to 344 are Cytoplasmic-facing; sequence EEMQHQAEQGTGGGDPRPILEHVEMLCVAFFTLEFLLRLASTPNLQRFARSALN. A helical membrane pass occupies residues 345-365; that stretch reads LVDLVAILPFYLQLLLECFTS. At 366–391 the chain is on the extracellular side; the sequence is EDQRHNKDSPREHDLETVGRVGKVGQ. A helical; Voltage-sensor transmembrane segment spans residues 392-412; the sequence is VLRIMRLMRIFRILKLARHST. At 413-427 the chain is on the cytoplasmic side; sequence GLRAFGFTLRQCYQQ. A helical membrane pass occupies residues 428 to 448; it reads VGCLMLFITMGIFSFSAAVYS. Topologically, residues 449–461 are extracellular; it reads VEHDVPGTNFTSI. A glycan (N-linked (GlcNAc...) asparagine) is linked at Asn-457. The segment at residues 462 to 482 is an intramembrane region (pore-forming); that stretch reads LHAWWWAAVSISTVGYGDMYP. Positions 474–479 match the Selectivity filter motif; it reads TVGYGD. The Extracellular portion of the chain corresponds to 483-488; that stretch reads ETHLGR. Residues 489–509 form a helical membrane-spanning segment; that stretch reads LFAFLCIAFGIILNGMPISIL. Topologically, residues 510–562 are cytoplasmic; it reads YNKFSDYYSKLKAYEYTAIRRERGKVNFMQRATKKMAECLSESHAQSTTRQEN.

Belongs to the potassium channel family. V (TC 1.A.1.2) subfamily. Kv8.2/KCNV2 sub-subfamily. In terms of assembly, heteromultimer with KCNB1, KCNC1 and KCNF1. Does not form homomultimers.

The protein localises to the cell membrane. Potassium channel subunit. Modulates channel activity by shifting the threshold and the half-maximal activation to more negative values. This chain is Potassium voltage-gated channel subfamily V member 2 (Kcnv2), found in Mus musculus (Mouse).